The primary structure comprises 557 residues: Dihydroxy-acid dehydratase (557 aa).

Cysteine 50 contacts [2Fe-2S] cluster. Aspartate 82 provides a ligand contact to Mg(2+). Cysteine 123 lines the [2Fe-2S] cluster pocket. Mg(2+)-binding residues include aspartate 124 and lysine 125. Lysine 125 bears the N6-carboxylysine mark. Cysteine 195 lines the [2Fe-2S] cluster pocket. Mg(2+) is bound at residue glutamate 447. Serine 473 functions as the Proton acceptor in the catalytic mechanism.

This sequence belongs to the IlvD/Edd family. Homodimer. It depends on [2Fe-2S] cluster as a cofactor. Mg(2+) is required as a cofactor.

It catalyses the reaction (2R)-2,3-dihydroxy-3-methylbutanoate = 3-methyl-2-oxobutanoate + H2O. The catalysed reaction is (2R,3R)-2,3-dihydroxy-3-methylpentanoate = (S)-3-methyl-2-oxopentanoate + H2O. Its pathway is amino-acid biosynthesis; L-isoleucine biosynthesis; L-isoleucine from 2-oxobutanoate: step 3/4. It functions in the pathway amino-acid biosynthesis; L-valine biosynthesis; L-valine from pyruvate: step 3/4. Functions in the biosynthesis of branched-chain amino acids. Catalyzes the dehydration of (2R,3R)-2,3-dihydroxy-3-methylpentanoate (2,3-dihydroxy-3-methylvalerate) into 2-oxo-3-methylpentanoate (2-oxo-3-methylvalerate) and of (2R)-2,3-dihydroxy-3-methylbutanoate (2,3-dihydroxyisovalerate) into 2-oxo-3-methylbutanoate (2-oxoisovalerate), the penultimate precursor to L-isoleucine and L-valine, respectively. This is Dihydroxy-acid dehydratase from Janthinobacterium sp. (strain Marseille) (Minibacterium massiliensis).